The sequence spans 590 residues: Oleate hydratase (590 aa).

4 residues coordinate FAD: A33, E56, S64, and E82. The active-site Proton acceptor is the E82. Y200 functions as the Proton donor in the catalytic mechanism. The FAD site is built by V249, S291, T508, and S512.

This sequence belongs to the oleate hydratase family. As to quaternary structure, monomer and homodimer. Both forms seem to be active. It depends on FAD as a cofactor.

It catalyses the reaction (R)-10-hydroxyoctadecanoate = (9Z)-octadecenoate + H2O. The catalysed reaction is (9Z)-octadecenoate + H2O = 10-hydroxyoctadecanoate. It carries out the reaction (9Z)-hexadecenoate + H2O = 10-hydroxyhexadecanoate. The enzyme catalyses (9Z,12Z)-octadecadienoate + H2O = (12Z)-10-hydroxyoctadecenoate. It catalyses the reaction (12Z)-10-hydroxyoctadecenoate + H2O = 10,13-dihydroxyoctadecanoate. The catalysed reaction is (9Z,12Z,15Z)-octadecatrienoate + H2O = (12Z,15Z)-10-hydroxyoctadecadienoate. The protein operates within lipid metabolism; fatty acid metabolism. Functionally, catalyzes the hydration of oleate at its cis-9-double bond to yield 10-hydroxyoctadecanoate, probably in the (R) configuration, and of linoleate at its cis-9- and cis-12-double bond to yield 10-hydroxy-12-octadecenoate and 10,13-dihydroxyoctadecanoate. Is not active on trans-double bonds and esterified fatty acids as substrate; is only active on cis-9- and/or cis-12-double bond of C16 and C18 fatty acids without any trans-configurations, producing 10-hydroxy and 10,13-dihydroxy derivatives. Appears to play a role in oleic acid detoxification and bacterial virulence. In Streptococcus pyogenes serotype M49 (strain NZ131), this protein is Oleate hydratase (sph).